A 534-amino-acid chain; its full sequence is Cytokine-like nuclear factor N-PAC (534 aa).

The PWWP domain maps to 8–66 (QGDLVWGKLGRYPPWPGKIVNPPKDLKKPRGKKCLFVKFFGTEDHAWIKVEQLKPYHAH). 2 stretches are compositionally biased toward basic and acidic residues: residues 93–122 (AKAK…QTGE) and 138–157 (RSRD…DKDS). The interval 93 to 168 (AKAKEHAKEH…SPQPSSLKKL (76 aa)) is disordered. A DNA-binding region (a.T hook) is located at residues 144–156 (PRKRGRPPKDDKD). The tract at residues 190–193 (DSWL) is interaction with histone H3. The dehydrogenase domain stretch occupies residues 242–534 (GNIIPTDKKI…MSAVYRAYIH (293 aa)). NAD(+)-binding positions include 252–266 (GFLG…IVSN), threonine 343, and lysine 486.

The protein belongs to the HIBADH-related family. NP60 subfamily. In terms of assembly, homotetramere. Binds to mononucleosomes.

The protein localises to the nucleus. Its subcellular location is the chromosome. Cytokine-like nuclear factor with chromatin gene reader activity involved in chromatin modification and regulation of gene expression. Acts as a nucleosome-destabilizing factor that is recruited to genes during transcriptional activation. Recognizes and binds histone H3 without a preference for specific epigenetic markers and also binds DNA. Interacts with KDM1B and promotes its histone demethylase activity by facilitating the capture of H3 tails, they form a multifunctional enzyme complex that modifies transcribed chromatin and facilitates Pol II transcription through nucleosomes. This chain is Cytokine-like nuclear factor N-PAC (glyr1), found in Xenopus tropicalis (Western clawed frog).